A 365-amino-acid polypeptide reads, in one-letter code: Ribosomal RNA large subunit methyltransferase F (365 aa).

Low complexity-rich tracts occupy residues Met-1–Gly-18 and Ala-30–Lys-42. A disordered region spans residues Met-1–Lys-50.

The protein belongs to the methyltransferase superfamily. METTL16/RlmF family.

It localises to the cytoplasm. It catalyses the reaction adenosine(1618) in 23S rRNA + S-adenosyl-L-methionine = N(6)-methyladenosine(1618) in 23S rRNA + S-adenosyl-L-homocysteine + H(+). Specifically methylates the adenine in position 1618 of 23S rRNA. The protein is Ribosomal RNA large subunit methyltransferase F of Shewanella oneidensis (strain ATCC 700550 / JCM 31522 / CIP 106686 / LMG 19005 / NCIMB 14063 / MR-1).